We begin with the raw amino-acid sequence, 298 residues long: Centromere protein O (298 aa).

The tract at residues 29 to 49 (NISNRKSEEPAVRKKESSLRT) is disordered. A compositionally biased stretch (basic and acidic residues) spans 33-49 (RKSEEPAVRKKESSLRT). S35 is modified (phosphoserine). A coiled-coil region spans residues 39–74 (AVRKKESSLRTKIRELRQQRDKLRAEVKQWGARVKE).

Belongs to the CENP-O/MCM21 family. As to quaternary structure, component of the CENPA-CAD complex, composed of CENPI, CENPK, CENPL, CENPO, CENPP, CENPQ, CENPR and CENPS. The CENPA-CAD complex interacts with the CENPA-NAC complex, at least composed of CENPA, CENPC, CENPH, CENPM, CENPN, CENPT and CENPU.

Its subcellular location is the nucleus. It localises to the chromosome. It is found in the centromere. The protein resides in the kinetochore. Functionally, component of the CENPA-CAD (nucleosome distal) complex, a complex recruited to centromeres which is involved in assembly of kinetochore proteins, mitotic progression and chromosome segregation. May be involved in incorporation of newly synthesized CENPA into centromeres via its interaction with the CENPA-NAC complex. Modulates the kinetochore-bound levels of NDC80 complex. The protein is Centromere protein O (Cenpo) of Mus musculus (Mouse).